The sequence spans 51 residues: Large ribosomal subunit protein bL33 (51 aa).

It belongs to the bacterial ribosomal protein bL33 family.

The chain is Large ribosomal subunit protein bL33 from Methylococcus capsulatus (strain ATCC 33009 / NCIMB 11132 / Bath).